Consider the following 499-residue polypeptide: Protein-tyrosine sulfotransferase (499 aa).

The Cytoplasmic portion of the chain corresponds to 1–9 (MRLPYRNKK). A helical; Signal-anchor for type II membrane protein membrane pass occupies residues 10–30 (VTLWVLFGIIVITMFLFKFTE). At 31-499 (LRPTCLFKVD…NIMEDPMADT (469 aa)) the chain is on the lumenal side. Residue 80–84 (RSGTT) coordinates 3'-phosphoadenylyl sulfate. Cysteine 98 and cysteine 158 form a disulfide bridge. The active-site Proton donor/acceptor is the glutamate 101. Residues 103–107 (RVIPR) are interaction with peptide substrate. 3'-phosphoadenylyl sulfate is bound by residues arginine 185, serine 193, and arginine 197. Cysteine 227 and cysteine 235 are disulfide-bonded. Residues tyrosine 240, 287 to 296 (SSDQVIKPVN), and lysine 302 contribute to the 3'-phosphoadenylyl sulfate site. 2 N-linked (GlcNAc...) asparagine glycosylation sites follow: asparagine 346 and asparagine 380. 2 disordered regions span residues 362-460 (KQVL…QKPK) and 476-499 (NNINNNINNNNNNNNIMEDPMADT). 2 stretches are compositionally biased toward low complexity: residues 375–400 (TNTIINNSNNKDNNNNQYTINKIIPE) and 408–434 (HVQQQHLQQQQQQHLQQQQHQRQQQQQ). Basic and acidic residues predominate over residues 443–460 (EREAEPDREQQLLHQKPK). Residues 476–491 (NNINNNINNNNNNNNI) show a composition bias toward low complexity.

The protein belongs to the protein sulfotransferase family.

It is found in the golgi apparatus membrane. The catalysed reaction is L-tyrosyl-[protein] + 3'-phosphoadenylyl sulfate = O-sulfo-L-tyrosine-[protein] + adenosine 3',5'-bisphosphate + H(+). Its function is as follows. Catalyzes the O-sulfation of tyrosine residues within acidic motifs of polypeptides. Has a role in protein secretion. The chain is Protein-tyrosine sulfotransferase from Drosophila melanogaster (Fruit fly).